The chain runs to 623 residues: Actin-related protein 8 (623 aa).

Residues 1–24 (MTQTDRDAENGRDREKDREKEQQR) are compositionally biased toward basic and acidic residues. A disordered region spans residues 1 to 29 (MTQTDRDAENGRDREKDREKEQQRGVKRP). 283–286 (DVGD) is a binding site for ATP. Low complexity predominate over residues 428–438 (TQSKQDQSSKA). Residues 428-458 (TQSKQDQSSKASADRKSFPKPSSFEGESSVC) are disordered.

Belongs to the actin family. ARP8 subfamily. In terms of assembly, component of the chromatin remodeling INO80 complex; specifically part of a complex module associated with the DBINO domain of INO80. Exists as monomers and dimers, but the dimer is most probably the biologically relevant form required for stable interactions with histones that exploits the twofold symmetry of the nucleosome core.

Its subcellular location is the nucleus. The protein resides in the chromosome. Its function is as follows. Plays an important role in the functional organization of mitotic chromosomes. Exhibits low basal ATPase activity, and unable to polymerize. Proposed core component of the chromatin remodeling INO80 complex which is involved in transcriptional regulation, DNA replication and probably DNA repair. Required for the recruitment of INO80 (and probably the INO80 complex) to sites of DNA damage Strongly prefer nucleosomes and H3-H4 tetramers over H2A-H2B dimers, suggesting it may act as a nucleosome recognition module within the complex. This Danio rerio (Zebrafish) protein is Actin-related protein 8 (actr8).